The sequence spans 554 residues: Tetratricopeptide repeat protein 34 (554 aa).

8 TPR repeats span residues 38 to 71 (ETSC…RPQA), 166 to 199 (SESL…EPGN), 200 to 233 (VKAL…DPGT), 294 to 327 (PSWR…TPSS), 328 to 361 (EAAQ…DTQD), 411 to 445 (NPYH…PAED), 452 to 485 (SEDF…APAQ), and 500 to 533 (ASVF…DPSH).

The chain is Tetratricopeptide repeat protein 34 (Ttc34) from Mus musculus (Mouse).